The following is a 288-amino-acid chain: MKILDGKATSAKVKAEVKERASALKNAGIEPALAVILVGSDKASQTYVAAKQKACEASGIRSVMHKLPQTTSQNELLALINVLNLDDSIDGILVQLPLPAHIDTTSVLETIWPQKDVDGFHAENVGKLVSGLDGFVPCTPLGIMRILKEYGIDVAGLNAVVIGRSNIVGKPMASLLLNASATVTITHSKTRNLKQICSAADLIVAAIGKPNFVTADMVKEGAIVIDVGINRLDDGRLVGDVDFEAVAPKSSFITPVPGGVGPMTIAMLLSNTIRSAQNRAKNLGIVKE.

NADP(+) is bound by residues glycine 163–serine 165, serine 188, and isoleucine 229.

This sequence belongs to the tetrahydrofolate dehydrogenase/cyclohydrolase family. Homodimer.

The catalysed reaction is (6R)-5,10-methylene-5,6,7,8-tetrahydrofolate + NADP(+) = (6R)-5,10-methenyltetrahydrofolate + NADPH. It carries out the reaction (6R)-5,10-methenyltetrahydrofolate + H2O = (6R)-10-formyltetrahydrofolate + H(+). It participates in one-carbon metabolism; tetrahydrofolate interconversion. In terms of biological role, catalyzes the oxidation of 5,10-methylenetetrahydrofolate to 5,10-methenyltetrahydrofolate and then the hydrolysis of 5,10-methenyltetrahydrofolate to 10-formyltetrahydrofolate. The sequence is that of Bifunctional protein FolD from Campylobacter curvus (strain 525.92).